A 563-amino-acid polypeptide reads, in one-letter code: Glutamate--tRNA ligase (563 aa).

The tract at residues 61–94 is disordered; it reads PEEQQKEVESLGGLEQHTKKEEKPKGLPELKNTE. The segment covering 76–94 has biased composition (basic and acidic residues); that stretch reads QHTKKEEKPKGLPELKNTE. The 'HIGH' region signature appears at 104-114; that stretch reads PNPSGPLHIGH.

It belongs to the class-I aminoacyl-tRNA synthetase family. Glutamate--tRNA ligase type 2 subfamily.

The protein resides in the cytoplasm. It catalyses the reaction tRNA(Glu) + L-glutamate + ATP = L-glutamyl-tRNA(Glu) + AMP + diphosphate. In terms of biological role, catalyzes the attachment of glutamate to tRNA(Glu) in a two-step reaction: glutamate is first activated by ATP to form Glu-AMP and then transferred to the acceptor end of tRNA(Glu). The protein is Glutamate--tRNA ligase of Methanosphaera stadtmanae (strain ATCC 43021 / DSM 3091 / JCM 11832 / MCB-3).